Reading from the N-terminus, the 392-residue chain is 2'-deamino-2'-hydroxyneamine transaminase (392 aa).

Lys249 is subject to N6-(pyridoxal phosphate)lysine.

Belongs to the class-III pyridoxal-phosphate-dependent aminotransferase family. It depends on pyridoxal 5'-phosphate as a cofactor.

It carries out the reaction neamine + 2-oxoglutarate = 6'-oxoparomamine + L-glutamate. The enzyme catalyses 2'-deamino-2'-hydroxyneamine + 2-oxoglutarate = 2'-deamino-2'-hydroxy-6'-dehydroparomamine + L-glutamate. The protein operates within antibiotic biosynthesis; kanamycin biosynthesis. In terms of biological role, aminotransferase that has 6'-oxoglucosaminyl:L-glutamate aminotransferase activity by catalyzing pyridoxal-5'-phosphate-mediated transamination leading to the conversion of paromamine to neamine in the biosynthetic pathway of kanamycin B. The protein is 2'-deamino-2'-hydroxyneamine transaminase (kacL) of Streptomyces kanamyceticus.